Consider the following 1693-residue polypeptide: MEAHQFIKAHGITTAIEQAALAAANSALANAVVVRPFLSHQQIEILINLMQPRQLVFRPEVFWNHPIQRVIHNELELYCRARSGRCLEIGAHPRSINDNPNVVHRCFLLPVGRDVQRWYTAPTRGPAANCRRSALRGLPAVDRTYCLDGFSGCNFPAETGIALYSLHDMSPSDVAEAMFRHGMTRLYAALHLPPEVLLPPGTYRTASYLLIHDGRRVVVTYEGDTSAGYNHDVSNLRSWIRTTKVTGDHPLVIERVRAIGCHFVLLLTAAPEPSPMPYVPYPRSTEVYVRSIFGPGGTPSLFPTSCSTKSTFHAVPAHIWDRLMLFGATLDDQAFCCSRLMTYLRGISYKVTVGTLVANEGWNASEDALTAVITAAYLTICHQRYLRTQAISKGMRRLEREHAQKFITPLYSWLFEKSGRDYIPGRQLEFYAQCRRWLSAGFHLDPRVLVFDESAPCRCRTAIRKALSKFCCFMKWLGQECTCFLQPAEGVVGDQGHDNEAYEGSDVDPAESAISDISGSYVVPGTALQPLYQALDLPAEIVARAGRLTATVKVSQVDGRIDCETLLGNKTFRTSFVDGAVLEANGPERYNLSFDASQSTMAAGPFSLTYAASAAGLEVRYVAAGLDHRAVFAPGVSPRSAPGEVTAFCSALYRFNREAQRHSLTGNLWFHPEGLIGLFAPFSPGHVWESANPFCGESTLYTRTWSEVDAVSSPARPDLGLMSEPSIPSRAATPTLAVLLPPPAPDPPPPPSAPALDEPASGATAGAPAITHQTARHRRLLFTYPDGSKVFAGSLFESTCTWLVNASNVDHRPGGGLCHAFYQRYPASFDAASFVMRDGAAAYTLTPRPIIHAVAPDYRLEHNPKRLEAAYRETCSRLGTAAYSLLGTGIYQVPIGPSFDAWERNHRPGDELYLPELAARWFEANRPTRPTLTITEDVARTANLAIELDSATDVGRACAGCRVTPGVVQYQFTAGVPGSGKSRSITQADVDVVVVPTRELRNAWRRRGFAAFNPHTAARVTQGRRVVIDEAPSLPPHLLLLHMQRAATVHLLGDPNQIPAIDFEHAGLVPAIRPDLGPTSWWHVTHRCPADVCELIRGAYPMIQTTSRVLRSLFWGEPAVGQKLVFTQAAKAANPGSVTVHEAQGATYTETTIIATADARGLIQSSRAHAIVALTRHTEKFVIIDAPGLLREVGISDAIVNNFFLAGGEIGHQRPSVIPRGNPDANVDTLAAFPPSCQISAFHQLAEELGHRPVPVAAVLPPCPELEQGLLYLPQGLTACDSVVTFELTDIVHCRMAAPNQRKAVLSTLVGRYGRRTKLYNASHSDVRDSLARFIPAIGPVQVTTCELYELVEAMVEKGQDGSAVLELDLCNRDVSRITFFQKDCNKFTTGETIAHGKVGQGISAWSKTFCALFGPWFRAIEKAILALLPQGVFYGDAFDDTVFSAAVAAAKASMVFENDFSEFDSTQNNFSLGLECAIMEECGMPQWLIRLYHLIRSAWILQAPKESLRGFWKKHSGEPGTLLWNTVWNMAVITHCYDFRDFQVAAFKGDDSIVLCSEYRQSPGAAVLIAGCGLKLKVDFRPIGLYAGVVVAPGLGALPDVVRFAGRLTEKNWGPGPERAEQLRLAVSDFLRKLTNVAQMCVDVVSRVYGVSPGLVHNLIGMLQAVADGKAHFTESVKPVLDLTNSILCRVE.

Residues 56–240 enclose the Alphavirus-like MT domain; it reads VFRPEVFWNH…HDVSNLRSWI (185 aa). The tract at residues 60 to 240 is methyltransferase; sequence EVFWNHPIQR…HDVSNLRSWI (181 aa). The tract at residues 241-439 is Y-domain; that stretch reads RTTKVTGDHP…FYAQCRRWLS (199 aa). Residues Cys434 and Cys481 are joined by a disulfide bond. The tract at residues 442–509 is putative protease; the sequence is FHLDPRVLVF…EAYEGSDVDP (68 aa). The zinc-binding stretch occupies residues 510–691; that stretch reads AESAISDISG…FSPGHVWESA (182 aa). The Zn(2+) site is built by His671, Glu673, and His686. The hinge stretch occupies residues 712–778; the sequence is SSPARPDLGL…AITHQTARHR (67 aa). Positions 737–769 are disordered; the sequence is AVLLPPPAPDPPPPPSAPALDEPASGATAGAPA. Residues 740–753 show a composition bias toward pro residues; the sequence is LPPPAPDPPPPPSA. The Macro domain occupies 775–921; the sequence is ARHRRLLFTY…LYLPELAARW (147 aa). The segment at 785–942 is X-domain; sequence PDGSKVFAGS…TITEDVARTA (158 aa). The (+)RNA virus helicase ATP-binding domain maps to 934–1082; sequence ITEDVARTAN…RPDLGPTSWW (149 aa). Residues 960–1204 are NTPase/helicase; sequence GCRVTPGVVQ…ISDAIVNNFF (245 aa). 975–982 is an ATP binding site; sequence GVPGSGKS. Positions 1083–1216 constitute a (+)RNA virus helicase C-terminal domain; the sequence is HVTHRCPADV…GGEIGHQRPS (134 aa). The tract at residues 1207–1693 is RNA-directed RNA polymerase; the sequence is GGEIGHQRPS…LTNSILCRVE (487 aa). The 112-residue stretch at 1454–1565 folds into the RdRp catalytic domain; that stretch reads SMVFENDFSE…LCSEYRQSPG (112 aa).

The protein belongs to the hepevirus non-structural polyprotein family. The protease domain interacts with host EIF2AK4 (via C-terminus); this interaction inhibits dimerization of EIF2AK4 and prevents EIF2AK4-mediated phosphorylation of host EIF2A. Requires Mg(2+) as cofactor. Post-translationally, ORF1 polyprotein does not seem to be processed into distinct enzymatic domains by a viral protease belonging to ORF1, but could be processed by a host serine protease like thrombin.

The protein localises to the host cytoplasm. It localises to the host perinuclear region. It carries out the reaction RNA(n) + a ribonucleoside 5'-triphosphate = RNA(n+1) + diphosphate. The enzyme catalyses GTP + S-adenosyl-L-methionine = N(7)-methyl-GTP + S-adenosyl-L-homocysteine. Its activity is regulated as follows. Putative protease: Inhibited by chymostatin. Functionally, methyltransferase: Displays a capping enzyme activity. This function is necessary since all viral RNAs are synthesized in the cytoplasm, and host capping enzymes are restricted to the nucleus. The enzymatic reaction involves a covalent link between 7-methyl-GMP and the methyltransferase, whereas eukaryotic capping enzymes form a covalent complex only with GMP. Methyltransferase catalyzes transfer of a methyl group from S-adenosylmethionine to GTP and GDP to yield m(7)GTP or m(7)GDP. GDP is a better substrate than GTP. This enzyme also displays guanylyltransferase activity to form a covalent complex, methyltransferase-m(7)GMP, from which 7-methyl-GMP is transferred to the mRNA to create the cap structure. In terms of biological role, Y-domain: Indispensable for virus replication. Putative protease: The putative protease domain although necessary for replication of the virus may not be a protease but rather a structural Zn(2+)-binding domain. Inhibits induction of IFN-beta by MDA5 and RIG-I pathways and down-regulates the expression of MDA5. Its function is as follows. NTPase/helicase: Multi-functional protein that exhibits NTPase and RNA unwinding activities. Hydrolyzes all NTPs efficiently and unwinds RNA duplexes containing 5' overhangs. Possesses a sequence independent RNA-5'-triphosphatase (RTPase) activity suggestive of its role in forming viral cap structure. Also participates in viral genome replication, RNA translocation and genome packaging/unpackaging. Functionally, RNA-directed RNA polymerase: Plays an essential role in the virus replication. Binds to the 3'-end of the genomic RNA to initiate viral replication. In Hepatitis E virus genotype 1 (isolate Human/Myanmar/HEVNE8L) (HEV-1), this protein is Non-structural polyprotein pORF1.